Consider the following 89-residue polypeptide: Large ribosomal subunit protein bL27 (89 aa).

A disordered region spans residues 1–26; sequence MAQKKAGGSSRNGRDSVGQRRGVKRF.

This sequence belongs to the bacterial ribosomal protein bL27 family.

In Desulfovibrio desulfuricans (strain ATCC 27774 / DSM 6949 / MB), this protein is Large ribosomal subunit protein bL27.